Reading from the N-terminus, the 1347-residue chain is Protocadherin-11 X-linked (1347 aa).

The signal sequence occupies residues 1–23 (MDLLSGTYIFAVLLACVVFHSGA). At 24 to 812 (QEKNYTIREE…VSSPTSDYVK (789 aa)) the chain is on the extracellular side. Cadherin domains lie at 26–139 (KNYT…APLF), 140–249 (PATV…HPVF), 250–355 (KETE…VPSI), 362–466 (NPVN…APVF), 467–570 (TQSF…SPVF), 571–673 (THNE…KPVF), and 677–795 (PSNC…APVT). Asn27, Asn48, and Asn54 each carry an N-linked (GlcNAc...) asparagine glycan. Asn344 carries N-linked (GlcNAc...) asparagine glycosylation. An N-linked (GlcNAc...) asparagine glycan is attached at Asn553. Residue Asn773 is glycosylated (N-linked (GlcNAc...) asparagine). Residues 813-833 (ILVAAVAGTITVVVVIFITAV) form a helical membrane-spanning segment. Topologically, residues 834–1347 (VRCRQAPHLK…DSPIMEEHPL (514 aa)) are cytoplasmic. 3 disordered regions span residues 1057-1091 (LPEGSQESSSDGGLGDHDAGSLTSTSHGLPLGYPQ), 1097-1116 (RATPSNRTEGDGNSDPESTF), and 1326-1347 (FTPRQQARPSRGDSPIMEEHPL).

As to expression, expressed strongly in fetal brain and brain (cortex, amygdala, thalamus, substantia nigra, hippocampus, caudate nucleus and corpus callosum). Expressed at low level in testis.

It is found in the cell membrane. In terms of biological role, potential calcium-dependent cell-adhesion protein. In Homo sapiens (Human), this protein is Protocadherin-11 X-linked (PCDH11X).